The primary structure comprises 341 residues: Ribose-phosphate pyrophosphokinase 5 (341 aa).

Mg(2+)-binding residues include Asp-152, His-154, and Asp-167.

It belongs to the ribose-phosphate pyrophosphokinase family.

Its subcellular location is the cytoplasm. The enzyme catalyses D-ribose 5-phosphate + ATP = 5-phospho-alpha-D-ribose 1-diphosphate + AMP + H(+). It functions in the pathway metabolic intermediate biosynthesis; 5-phospho-alpha-D-ribose 1-diphosphate biosynthesis; 5-phospho-alpha-D-ribose 1-diphosphate from D-ribose 5-phosphate (route I): step 1/1. In terms of biological role, 5-phosphoribose 1-diphosphate synthase involved in nucleotide, histidine, and tryptophan biosynthesis. Active in heteromultimeric complexes with other 5-phosphoribose 1-diphosphate synthases. The protein is Ribose-phosphate pyrophosphokinase 5 of Schizosaccharomyces pombe (strain 972 / ATCC 24843) (Fission yeast).